Consider the following 318-residue polypeptide: 3'-5' exoribonuclease YhaM (318 aa).

Positions 163-279 constitute an HD domain; that stretch reads HVVSMLDLAK…LHYIDNLDAK (117 aa).

This sequence belongs to the YhaM family.

Shows a 3'-5' exoribonuclease activity. The protein is 3'-5' exoribonuclease YhaM of Bacillus cytotoxicus (strain DSM 22905 / CIP 110041 / 391-98 / NVH 391-98).